The primary structure comprises 134 residues: uncharacterized protein (134 aa).

It is found in the cell membrane. Functionally, may have a role in the regulation of NDH-1 biosynthesis. This is an uncharacterized protein from Paracoccus denitrificans.